Here is a 157-residue protein sequence, read N- to C-terminus: uncharacterized protein (157 aa).

Residues 9-146 (LLINYKTLDE…GDFYVWHPET (138 aa)) form the N-acetyltransferase domain.

This is an uncharacterized protein from Bacillus cereus (strain ATCC 10987 / NRS 248).